A 149-amino-acid polypeptide reads, in one-letter code: Oligosaccharyltransferase complex subunit ostc-A (149 aa).

Residues 1-32 are Cytoplasmic-facing; the sequence is MESLYRVPFTVLECPNLKLKKPSWLHMPSAMT. A helical membrane pass occupies residues 33–53; sequence VYAMVVVSYFLITGGIIYDVI. Topologically, residues 54-83 are extracellular; sequence VEPPSVGSMTDEHGHQRPVAFLAYRVNGQY. The chain crosses the membrane as a helical span at residues 84–104; it reads IMEGLASSFLFTMGGLGFIIL. Over 105 to 117 the chain is Cytoplasmic; that stretch reads DRSNTPNIPKLNR. Residues 118–138 form a helical membrane-spanning segment; that stretch reads FLLLFIGFVCVLLSFFMARVF. Residues 139–149 lie on the Extracellular side of the membrane; sequence MRMKLPGYLMG.

It belongs to the OSTC family. In terms of assembly, specific component of the STT3A-containing form of the oligosaccharyltransferase (OST) complex.

The protein localises to the membrane. It participates in protein modification; protein glycosylation. Specific component of the STT3A-containing form of the oligosaccharyl transferase (OST) complex that catalyzes the initial transfer of a defined glycan (Glc(3)Man(9)GlcNAc(2) in eukaryotes) from the lipid carrier dolichol-pyrophosphate to an asparagine residue within an Asn-X-Ser/Thr consensus motif in nascent polypeptide chains, the first step in protein N-glycosylation. N-glycosylation occurs cotranslationally and the complex associates with the Sec61 complex at the channel-forming translocon complex that mediates protein translocation across the endoplasmic reticulum (ER). All subunits are required for a maximal enzyme activity. The sequence is that of Oligosaccharyltransferase complex subunit ostc-A from Xenopus laevis (African clawed frog).